A 304-amino-acid chain; its full sequence is Polyisoprenyl-teichoic acid--peptidoglycan teichoic acid transferase TagU (304 aa).

Residues 1 to 4 (MKKK) lie on the Cytoplasmic side of the membrane. Residues 5–25 (ILFWILGIIGIMIIGGGVYAY) traverse the membrane as a helical; Signal-anchor for type II membrane protein segment. Over 26 to 304 (NVYSSVSKTL…KLRAHLELTK (279 aa)) the chain is Extracellular.

This sequence belongs to the LytR/CpsA/Psr (LCP) family.

The protein resides in the cell membrane. The protein operates within cell wall biogenesis. May catalyze the final step in cell wall teichoic acid biosynthesis, the transfer of the anionic cell wall polymers (APs) from their lipid-linked precursor to the cell wall peptidoglycan (PG). This Bacillus mycoides (strain KBAB4) (Bacillus weihenstephanensis) protein is Polyisoprenyl-teichoic acid--peptidoglycan teichoic acid transferase TagU.